A 263-amino-acid chain; its full sequence is MRRQEAGTSSLATRVGPEVLTTAAVASVTGCDDPLAAVLLGRPKVIEVLQRSAELIDRVPALAAAHHQIADYHAMRSRFFDAYLADAAAEGIRQCVVLAAGLDTRAFRLPWPDGMTVFEIDQPTVLRYKENALTAHGARPAADWHPVGVESDMPWPRRLWESGFNHNEPTIWLAEGLLPLPDATQDALISEIDGLSAAGSRIAFDDVLGMCSGRSDAPGWLTSRGWWTDVVEARHLPELSGRRDDDAQSYTAHAALVTAEKIA.

S-adenosyl-L-methionine is bound by residues D121 and 150-151 (ES).

It belongs to the UPF0677 family.

Functionally, exhibits S-adenosyl-L-methionine-dependent methyltransferase activity. This chain is Putative S-adenosyl-L-methionine-dependent methyltransferase Mkms_0098, found in Mycobacterium sp. (strain KMS).